Consider the following 537-residue polypeptide: uncharacterized protein (537 aa).

6 helical membrane-spanning segments follow: residues 5–25, 40–60, 63–83, 115–135, 149–169, and 197–217; these read IGLGLIHGLMYGIVPVAPWFV, LAVAGTIAGQVTLLALTFFGW, VLWVWYYFEPALIILGTMAVV, GLYYFLMSFGLMFCNPLHLEG, VYLLAFTVSYTAIIFIFWVTL, and VGIVAALFLQFANCTPEALVI.

The protein resides in the plastid. It is found in the chloroplast membrane. This is an uncharacterized protein from Ostreococcus tauri.